The primary structure comprises 156 residues: C-type lectin lectoxin-Lei1 (156 aa).

The signal sequence occupies residues 1 to 23; the sequence is MRRFLFLSLGVLVVAFSLNGIGA. Intrachain disulfides connect Cys27–Cys38, Cys55–Cys154, and Cys129–Cys146. The C-type lectin domain maps to 34–155; it reads FDRFCYKVIK…CESRNIFICK (122 aa). Asn60 and Asn99 each carry an N-linked (GlcNAc...) asparagine glycan. The Sugar-binding signature appears at 119-121; it reads KRN. Asn142 contacts Ca(2+).

The protein belongs to the true venom lectin family. In terms of tissue distribution, expressed by the venom gland.

It localises to the secreted. Functionally, lectin which recognizes specific carbohydrate structures and agglutinates a variety of animal cells by binding to cell-surface glycoproteins and glycolipids. May be a calcium-dependent lectin. The protein is C-type lectin lectoxin-Lei1 of Leioheterodon madagascariensis (Malagasy giant hognose snake).